A 300-amino-acid polypeptide reads, in one-letter code: Ribosomal RNA small subunit methyltransferase H (300 aa).

S-adenosyl-L-methionine-binding positions include 35 to 37 (GGH), Asp55, Phe82, Asp100, and Gln107.

The protein belongs to the methyltransferase superfamily. RsmH family.

Its subcellular location is the cytoplasm. It carries out the reaction cytidine(1402) in 16S rRNA + S-adenosyl-L-methionine = N(4)-methylcytidine(1402) in 16S rRNA + S-adenosyl-L-homocysteine + H(+). Functionally, specifically methylates the N4 position of cytidine in position 1402 (C1402) of 16S rRNA. The sequence is that of Ribosomal RNA small subunit methyltransferase H from Chlamydia trachomatis serovar A (strain ATCC VR-571B / DSM 19440 / HAR-13).